A 340-amino-acid chain; its full sequence is Replication factor C subunit 3 (340 aa).

N-acetylserine is present on serine 2. ATP is bound by residues 16–19 (VEKY), arginine 20, tyrosine 28, 53–61 (GPPGTGKTS), asparagine 148, and arginine 206.

It belongs to the activator 1 small subunits family. As to quaternary structure, replication factor C (RFC) is a heteropentamer of subunits RFC1, RFC2, RFC3, RFC4 and RFC5 and forms a complex with POL30/PCNA in the presence of ATP. Component of the RAD24-RFC complex which consists of RAD14, RFC2, RFC3, RFC4 and RFC5 and associates with the checkpoint clamp DDC1:MEC3:RAD17 complex. Component of the ELG1-RFC complex which consists of ELG1, RFC2, RFC3, RFC4 and RFC5. Component of the CTF18-RFC complex, which consists of CTF18, CTF8, DCC1, RFC2, RFC3, RFC4 and RFC5. RFC3 interacts with ECO1 and POL30/PCNA.

It localises to the nucleus. In terms of biological role, component of ATP-dependent clamp loader (RFC and RFC-like) complexes for DNA clamps, such as the POL30/PCNA homotrimer and the checkpoint clamp DDC1:MEC3:RAD17 complex. During a clamp loading circle, the RFC:clamp complex binds to DNA and the recognition of the double-stranded/single-stranded junction stimulates ATP hydrolysis by RFC. The complex presumably provides bipartite ATP sites in which one subunit supplies a catalytic site for hydrolysis of ATP bound to the neighboring subunit. Dissociation of RFC from the clamp leaves the clamp encircling DNA. Component of the replication factor C (RFC or activator 1) complex which loads POL30/PCNA and acts during elongation of primed DNA templates by DNA polymerase delta and epsilon. RFC has an essential but redundant activity in sister chromatid cohesion establishment. Component of the RFC-like complex CTF18-RFC which is required for efficient establishment of chromosome cohesion during S-phase and may load or unload POL30/PCNA. Component of the RFC-like RAD24-RFC complex which loads the checkpoint clamp DDC1:MEC3:RAD17 complex and is involved in DNA repair pathways. Component of the RFC-like ELG1-RFC complex which appears to have a role in DNA replication, replication fork re-start, recombination and repair. RFC3 supplies a catalytic site to the ATP site of RFC4. This chain is Replication factor C subunit 3 (RFC3), found in Saccharomyces cerevisiae (strain ATCC 204508 / S288c) (Baker's yeast).